A 174-amino-acid chain; its full sequence is Shikimate kinase 2 (174 aa).

Position 12–17 (12–17 (GCGKTT)) interacts with ATP. Thr-16 and Asp-32 together coordinate Mg(2+). Substrate-binding residues include Asp-34, Arg-58, and Gly-79. The tract at residues 112–126 (QAAPEEDLRPTLTGK) is LID domain. Position 120 (Arg-120) interacts with ATP. Substrate is bound at residue Arg-139.

It belongs to the shikimate kinase family. AroL subfamily. In terms of assembly, monomer. The cofactor is Mg(2+).

The protein localises to the cytoplasm. It carries out the reaction shikimate + ATP = 3-phosphoshikimate + ADP + H(+). The protein operates within metabolic intermediate biosynthesis; chorismate biosynthesis; chorismate from D-erythrose 4-phosphate and phosphoenolpyruvate: step 5/7. Its function is as follows. Catalyzes the specific phosphorylation of the 3-hydroxyl group of shikimic acid using ATP as a cosubstrate. This Shigella boydii serotype 4 (strain Sb227) protein is Shikimate kinase 2.